A 449-amino-acid polypeptide reads, in one-letter code: Glycoprotein endo-alpha-1,2-mannosidase (449 aa).

Residues 1–8 (MIRFRRRT) lie on the Cytoplasmic side of the membrane. Residues 9–29 (CITLSIFIFLVCLIMAGLKHL) traverse the membrane as a helical; Signal-anchor for type II membrane protein segment. The Lumenal portion of the chain corresponds to 30–449 (RPENAAFGSP…YMKEKEHWLV (420 aa)). Residues 59 to 449 (DSENHLKGNT…YMKEKEHWLV (391 aa)) are catalytic.

This sequence belongs to the glycosyl hydrolase 99 family.

It is found in the golgi apparatus membrane. It carries out the reaction N-{alpha-Glc-(1-&gt;3)-alpha-Man-(1-&gt;2)-alpha-Man-(1-&gt;2)-alpha-Man-(1-&gt;3)-[alpha-Man-(1-&gt;2)-alpha-Man-(1-&gt;3)-[alpha-Man-(1-&gt;2)-alpha-Man-(1-&gt;6)]-alpha-Man-(1-&gt;6)]-beta-Man-(1-&gt;4)-beta-GlcNAc-(1-&gt;4)-beta-GlcNAc}-L-asparaginyl-[protein] + H2O = alpha-D-glucosyl-(1-&gt;3)-D-mannopyranose + N(4)-{alpha-D-Man-(1-&gt;2)-alpha-D-Man-(1-&gt;3)-[alpha-D-Man-(1-&gt;2)-alpha-D-Man-(1-&gt;3)-[alpha-D-Man-(1-&gt;2)-alpha-D-Man-(1-&gt;6)]-alpha-D-Man-(1-&gt;6)]-beta-D-Man-(1-&gt;4)-beta-D-GlaNAc-(1-&gt;4)-beta-D-GlcNAc}-L-asparaginyl-[protein] (N-glucan mannose isomer 8A1,2,3B1,2). The polypeptide is Glycoprotein endo-alpha-1,2-mannosidase (manea) (Xenopus laevis (African clawed frog)).